The chain runs to 131 residues: MAGTKPSDLGSLKVGQYVVIDGVACRVMDTTHSKPGKHGGAKVRLVAMGIFESVKKEHVGPASSRIDVPLIDKRKGQVLALMGENVQIMDMETYETLELPMPEDVEGIDSGVEVEYFEAMDRYKITRVISK.

Lys37 is modified (hypusine).

It belongs to the eIF-5A family.

Its subcellular location is the cytoplasm. In terms of biological role, functions by promoting the formation of the first peptide bond. The polypeptide is Translation initiation factor 5A (eIF5A) (Methanococcus maripaludis (strain C5 / ATCC BAA-1333)).